Here is a 199-residue protein sequence, read N- to C-terminus: Adenylyl-sulfate kinase (199 aa).

An ATP-binding site is contributed by 34 to 41 (GLSGSGKS). Ser-108 (phosphoserine intermediate) is an active-site residue.

It belongs to the APS kinase family.

It carries out the reaction adenosine 5'-phosphosulfate + ATP = 3'-phosphoadenylyl sulfate + ADP + H(+). Its pathway is sulfur metabolism; hydrogen sulfide biosynthesis; sulfite from sulfate: step 2/3. Functionally, catalyzes the synthesis of activated sulfate. The polypeptide is Adenylyl-sulfate kinase (Staphylococcus carnosus (strain TM300)).